A 182-amino-acid polypeptide reads, in one-letter code: Probable RNA 2'-phosphotransferase (182 aa).

Belongs to the KptA/TPT1 family.

Its function is as follows. Removes the 2'-phosphate from RNA via an intermediate in which the phosphate is ADP-ribosylated by NAD followed by a presumed transesterification to release the RNA and generate ADP-ribose 1''-2''-cyclic phosphate (APPR&gt;P). May function as an ADP-ribosylase. The polypeptide is Probable RNA 2'-phosphotransferase (Trichormus variabilis (strain ATCC 29413 / PCC 7937) (Anabaena variabilis)).